The following is a 76-amino-acid chain: Cytochrome c oxidase subunit 6C-2 (76 aa).

Residues 4-14 are Mitochondrial matrix-facing; that stretch reads GALLPKPQMRG. The chain crosses the membrane as a helical span at residues 15–55; it reads LLAKRLRVHIVGAFVVALGVAAAYKFGVAEPRKKAYADFYR. The Mitochondrial intermembrane segment spans residues 56–76; that stretch reads NYDSMKDFEEMRQAGVFQSAK. Position 74 is a phosphoserine (Ser74).

Belongs to the cytochrome c oxidase subunit 6c family. Component of the cytochrome c oxidase (complex IV, CIV), a multisubunit enzyme composed of 14 subunits. The complex is composed of a catalytic core of 3 subunits MT-CO1, MT-CO2 and MT-CO3, encoded in the mitochondrial DNA, and 11 supernumerary subunits COX4I, COX5A, COX5B, COX6A, COX6B, COX6C, COX7A, COX7B, COX7C, COX8 and NDUFA4, which are encoded in the nuclear genome. The complex exists as a monomer or a dimer and forms supercomplexes (SCs) in the inner mitochondrial membrane with NADH-ubiquinone oxidoreductase (complex I, CI) and ubiquinol-cytochrome c oxidoreductase (cytochrome b-c1 complex, complex III, CIII), resulting in different assemblies (supercomplex SCI(1)III(2)IV(1) and megacomplex MCI(2)III(2)IV(2)).

It localises to the mitochondrion inner membrane. Its pathway is energy metabolism; oxidative phosphorylation. In terms of biological role, component of the cytochrome c oxidase, the last enzyme in the mitochondrial electron transport chain which drives oxidative phosphorylation. The respiratory chain contains 3 multisubunit complexes succinate dehydrogenase (complex II, CII), ubiquinol-cytochrome c oxidoreductase (cytochrome b-c1 complex, complex III, CIII) and cytochrome c oxidase (complex IV, CIV), that cooperate to transfer electrons derived from NADH and succinate to molecular oxygen, creating an electrochemical gradient over the inner membrane that drives transmembrane transport and the ATP synthase. Cytochrome c oxidase is the component of the respiratory chain that catalyzes the reduction of oxygen to water. Electrons originating from reduced cytochrome c in the intermembrane space (IMS) are transferred via the dinuclear copper A center (CU(A)) of subunit 2 and heme A of subunit 1 to the active site in subunit 1, a binuclear center (BNC) formed by heme A3 and copper B (CU(B)). The BNC reduces molecular oxygen to 2 water molecules using 4 electrons from cytochrome c in the IMS and 4 protons from the mitochondrial matrix. This chain is Cytochrome c oxidase subunit 6C-2 (Cox6c2), found in Rattus norvegicus (Rat).